The primary structure comprises 336 residues: Isopentenyl-diphosphate delta-isomerase (336 aa).

5–6 provides a ligand contact to substrate; that stretch reads RK. Residues 60–62, Ser-90, and Asn-117 each bind FMN; that span reads AMT. Position 147 (Gln-147) interacts with substrate. Glu-148 contacts Mg(2+). FMN is bound by residues Lys-179, Ser-204, Thr-209, 253 to 255, and 274 to 275; these read GVR and SR.

The protein belongs to the IPP isomerase type 2 family. As to quaternary structure, homooctamer. Dimer of tetramers. FMN serves as cofactor. NADPH is required as a cofactor. It depends on Mg(2+) as a cofactor.

It is found in the cytoplasm. It carries out the reaction isopentenyl diphosphate = dimethylallyl diphosphate. Involved in the biosynthesis of isoprenoids. Catalyzes the 1,3-allylic rearrangement of the homoallylic substrate isopentenyl (IPP) to its allylic isomer, dimethylallyl diphosphate (DMAPP). This Streptococcus pneumoniae serotype 4 (strain ATCC BAA-334 / TIGR4) protein is Isopentenyl-diphosphate delta-isomerase.